Consider the following 203-residue polypeptide: GTP-binding protein yptV1 (203 aa).

Residues 15-23, 33-40, 63-67, 121-124, and 151-153 contribute to the GTP site; these read GDSGVGKSC, YTESYIST, DTAGQ, NKSD, and SAK. Positions 37–45 match the Effector region motif; that stretch reads YISTIGVDF. The interval 173–203 is disordered; it reads MASQPVPPKPGGPVVRPTEGKPINNKSSSCC. Residues Cys202 and Cys203 are each lipidated (S-geranylgeranyl cysteine).

This sequence belongs to the small GTPase superfamily. Rab family.

Its subcellular location is the cell membrane. In terms of biological role, protein transport. Probably involved in vesicular traffic. In Volvox carteri (Green alga), this protein is GTP-binding protein yptV1 (YPTV1).